We begin with the raw amino-acid sequence, 148 residues long: Copper transport protein ctr6 (148 aa).

Topologically, residues 1 to 33 (MNHGGNSTMRHCSMKMTFNTDYDNLCIVFKSWH) are extracellular. A helical transmembrane segment spans residues 34 to 54 (IGNLSQFLLSLLAIAILGYLF). Residues 55 to 108 (ERLRSFTSLKETEFQRGYAGQQSEGLLTHHSKSLKSGRPFRLCALYAVQLVFSY) lie on the Cytoplasmic side of the membrane. The helical transmembrane segment at 109 to 129 (FLMLVAMTYNAYVILAIAIGA) threads the bilayer. Residues 130-148 (AFGYRRSHCDTVQTVGLCH) are Extracellular-facing.

It belongs to the copper transporter (Ctr) (TC 1.A.56) family. SLC31A subfamily. Homotrimer.

The protein resides in the vacuole membrane. In terms of biological role, mobilizes stored copper from the vacuole to the cytoplasm under conditions of copper limitation. This is Copper transport protein ctr6 (ctr6) from Schizosaccharomyces pombe (strain 972 / ATCC 24843) (Fission yeast).